The primary structure comprises 182 residues: Crossover junction endodeoxyribonuclease RuvC (182 aa).

Residues aspartate 7, glutamate 69, and aspartate 141 contribute to the active site. Mg(2+) contacts are provided by aspartate 7, glutamate 69, and aspartate 141.

The protein belongs to the RuvC family. Homodimer which binds Holliday junction (HJ) DNA. The HJ becomes 2-fold symmetrical on binding to RuvC with unstacked arms; it has a different conformation from HJ DNA in complex with RuvA. In the full resolvosome a probable DNA-RuvA(4)-RuvB(12)-RuvC(2) complex forms which resolves the HJ. Mg(2+) serves as cofactor.

Its subcellular location is the cytoplasm. The enzyme catalyses Endonucleolytic cleavage at a junction such as a reciprocal single-stranded crossover between two homologous DNA duplexes (Holliday junction).. The RuvA-RuvB-RuvC complex processes Holliday junction (HJ) DNA during genetic recombination and DNA repair. Endonuclease that resolves HJ intermediates. Cleaves cruciform DNA by making single-stranded nicks across the HJ at symmetrical positions within the homologous arms, yielding a 5'-phosphate and a 3'-hydroxyl group; requires a central core of homology in the junction. The consensus cleavage sequence is 5'-(A/T)TT(C/G)-3'. Cleavage occurs on the 3'-side of the TT dinucleotide at the point of strand exchange. HJ branch migration catalyzed by RuvA-RuvB allows RuvC to scan DNA until it finds its consensus sequence, where it cleaves and resolves the cruciform DNA. This is Crossover junction endodeoxyribonuclease RuvC from Delftia acidovorans (strain DSM 14801 / SPH-1).